Reading from the N-terminus, the 263-residue chain is Shikimate dehydrogenase (NADP(+)) (263 aa).

Residues 16-18 (SKS) and threonine 65 each bind shikimate. Lysine 69 (proton acceptor) is an active-site residue. The shikimate site is built by asparagine 90 and aspartate 105. NADP(+) is bound by residues 125 to 129 (GAGGS), serine 181, and leucine 208. Tyrosine 210 is a shikimate binding site. Glycine 230 provides a ligand contact to NADP(+). Glutamine 237 provides a ligand contact to shikimate.

Belongs to the shikimate dehydrogenase family. Homodimer.

It carries out the reaction shikimate + NADP(+) = 3-dehydroshikimate + NADPH + H(+). It functions in the pathway metabolic intermediate biosynthesis; chorismate biosynthesis; chorismate from D-erythrose 4-phosphate and phosphoenolpyruvate: step 4/7. Functionally, involved in the biosynthesis of the chorismate, which leads to the biosynthesis of aromatic amino acids. Catalyzes the reversible NADPH linked reduction of 3-dehydroshikimate (DHSA) to yield shikimate (SA). In Helicobacter pylori (strain ATCC 700392 / 26695) (Campylobacter pylori), this protein is Shikimate dehydrogenase (NADP(+)).